The primary structure comprises 155 residues: Ribosome maturation factor RimP (155 aa).

The protein belongs to the RimP family.

The protein resides in the cytoplasm. Its function is as follows. Required for maturation of 30S ribosomal subunits. This Staphylococcus aureus (strain bovine RF122 / ET3-1) protein is Ribosome maturation factor RimP.